The primary structure comprises 141 residues: Ribonuclease P protein component (141 aa).

Disordered stretches follow at residues 37–56 and 114–141; these read RTEEESNAAKTGDNPRVGFT and RRITAKGERRSGRKRRTERPEPGPVNGK. A compositionally biased stretch (basic and acidic residues) spans 114–123; the sequence is RRITAKGERR.

This sequence belongs to the RnpA family. Consists of a catalytic RNA component (M1 or rnpB) and a protein subunit.

The enzyme catalyses Endonucleolytic cleavage of RNA, removing 5'-extranucleotides from tRNA precursor.. Its function is as follows. RNaseP catalyzes the removal of the 5'-leader sequence from pre-tRNA to produce the mature 5'-terminus. It can also cleave other RNA substrates such as 4.5S RNA. The protein component plays an auxiliary but essential role in vivo by binding to the 5'-leader sequence and broadening the substrate specificity of the ribozyme. The protein is Ribonuclease P protein component of Brucella suis biovar 1 (strain 1330).